The sequence spans 151 residues: Macrodomain Ter protein (151 aa).

Belongs to the MatP family. In terms of assembly, homodimer.

Its subcellular location is the cytoplasm. Required for spatial organization of the terminus region of the chromosome (Ter macrodomain) during the cell cycle. Prevents early segregation of duplicated Ter macrodomains during cell division. Binds specifically to matS, which is a 13 bp signature motif repeated within the Ter macrodomain. In Cronobacter sakazakii (strain ATCC BAA-894) (Enterobacter sakazakii), this protein is Macrodomain Ter protein.